A 173-amino-acid polypeptide reads, in one-letter code: Lithostathine-2 (173 aa).

The first 22 residues, 1-22 (MAQNNVYLILFLCLMFLSYSQG), serve as a signal peptide directing secretion. The region spanning 41–171 (INCPEGANAY…EAQYSFVCKF (131 aa)) is the C-type lectin domain. Intrachain disulfides connect cysteine 43–cysteine 54, cysteine 71–cysteine 169, and cysteine 144–cysteine 161.

In terms of tissue distribution, expressed only in regenerating islets and normal exocrine pancreas, but not in normal pancreatic islets. Expressed strongly in pancreas, weakly in liver, but not at all in gall bladder.

Its subcellular location is the secreted. In terms of biological role, might act as an inhibitor of spontaneous calcium carbonate precipitation. In Mus musculus (Mouse), this protein is Lithostathine-2 (Reg2).